The sequence spans 278 residues: MCRRPDCGFSFSPGPVILLWCCLLLSIVSSAAVNVAPTAAEKVPAECPELTRRCLLGEVFQGDEYESWLRPLVNVTGRDGPLSQLIRYRPVTPEAANSVLLDEAFLDTLALLYNNPDQLRALLTLLSSDTAPRWMTVMRGYSECGDGSPAVYTCVDDLCRGYDLTRLSYGRSIFTEHVLGFELVPPSLFNVVVAIRNEATRTNRAVRLPVSTAAAPEGITLFYGLYNAVKEFCLRHQLDPPLLRHLDKYYAGLPPELKQTRVNLPAHSRYGPQAVDAR.

A signal peptide spans 1–32 (MCRRPDCGFSFSPGPVILLWCCLLLSIVSSAA). Residues 43–256 (VPAECPELTR…DKYYAGLPPE (214 aa)) form the gL betaherpesvirus-type domain. Residues Cys-154 and Cys-159 are joined by a disulfide bond.

The protein belongs to the herpesviridae glycoprotein L (gL) family. Betaherpesvirinae gL subfamily. Interacts with glycoprotein H (gH); this interaction is necessary for the correct processing and cell surface expression of gH. Forms the envelope pentamer complex (PC) composed of gH, gL, UL128, UL130, and UL131A. The pentamer interacts with host NRP2. Forms the envelope trimer complex composed of gH, gL, and gO. The trimer interacts with host PDGFRA. The trimer also interacts with host EPHA2.

Its subcellular location is the virion membrane. It is found in the host cell membrane. The protein localises to the host Golgi apparatus. The protein resides in the host trans-Golgi network. Functionally, the heterodimer glycoprotein H-glycoprotein L is required for the fusion of viral and plasma membranes leading to virus entry into the host cell. Acts as a functional inhibitor of gH and maintains gH in an inhibited form. Upon binding to host integrins, gL dissociates from gH leading to activation of the viral fusion glycoproteins gB and gH. In human cytomegalovirus, forms two distincts complexes to mediate viral entry, a trimer and a pentamer at the surface of the virion envelope. The gH-gL-gO trimer is required for infection in fibroblasts by interacting with host PDGFRA, and in glioblastoma cells by interacting with host EPHA2. The gH-gL-UL128-UL130-UL131A pentamer is essential for viral entry in epithelial, endothelial and myeloid cells via interaction with host NRP2. In Human cytomegalovirus (strain 119) (HHV-5), this protein is Envelope glycoprotein L.